Reading from the N-terminus, the 365-residue chain is Pituitary-specific positive transcription factor 1 (365 aa).

Residues 5 to 12 (AFSADSFT) carry the 9aaTAD motif. The interval 160–191 (PAVLSEEPPLGGTKDLRLRSRPPDDPPDMDSP) is disordered. Positions 173–183 (KDLRLRSRPPD) are enriched in basic and acidic residues. Positions 188 to 262 (MDSPQIRELE…ILAKWLDEAE (75 aa)) constitute a POU-specific domain. A DNA-binding region (homeobox) is located at residues 278-337 (KRKRRTTISLGAKEALERSFREKIKPSSQEIVRMAEGLHLEKEVVRVWFCNRRQREKRVK).

Belongs to the POU transcription factor family. Class-1 subfamily.

Its subcellular location is the nucleus. Its function is as follows. Transcription factor that activates growth hormone and prolactin genes. Specifically binds to the consensus sequence 5'-TAAAT-3'. The polypeptide is Pituitary-specific positive transcription factor 1 (pou1f1) (Oncorhynchus keta (Chum salmon)).